Reading from the N-terminus, the 305-residue chain is UDP-3-O-acyl-N-acetylglucosamine deacetylase (305 aa).

Zn(2+) is bound by residues H78, H237, and D241. Residue H264 is the Proton donor of the active site.

Belongs to the LpxC family. Requires Zn(2+) as cofactor.

The catalysed reaction is a UDP-3-O-[(3R)-3-hydroxyacyl]-N-acetyl-alpha-D-glucosamine + H2O = a UDP-3-O-[(3R)-3-hydroxyacyl]-alpha-D-glucosamine + acetate. It participates in glycolipid biosynthesis; lipid IV(A) biosynthesis; lipid IV(A) from (3R)-3-hydroxytetradecanoyl-[acyl-carrier-protein] and UDP-N-acetyl-alpha-D-glucosamine: step 2/6. Functionally, catalyzes the hydrolysis of UDP-3-O-myristoyl-N-acetylglucosamine to form UDP-3-O-myristoylglucosamine and acetate, the committed step in lipid A biosynthesis. The chain is UDP-3-O-acyl-N-acetylglucosamine deacetylase from Dechloromonas aromatica (strain RCB).